A 451-amino-acid chain; its full sequence is Vacuolar cation/proton exchanger 1a (451 aa).

The Cytoplasmic portion of the chain corresponds to 1 to 58 (MEAAAAMEAGRKLAARHPHGRSRTAHNMSSSSLRKKSDAALVRKVPVAPLRPLLANLQ). Positions 9–37 (AGRKLAARHPHGRSRTAHNMSSSSLRKKS) are disordered. Residues 13-24 (LAARHPHGRSRT) show a composition bias toward basic residues. Residues 59-79 (EVFLATKLAVLFPAVPLAIAA) form a helical membrane-spanning segment. Residues 80 to 86 (QCFRFDQ) are Vacuolar-facing. Residues 87–107 (VWVFALSLLGLIPLAERVSFL) form a helical membrane-spanning segment. Residues 108-120 (TEQIALYTGPTVG) lie on the Cytoplasmic side of the membrane. The helical transmembrane segment at 121–141 (GLLNATCGNATELIIALFALL) threads the bilayer. Residues 128–163 (GNATELIIALFALLKGKIEVVKCSLLGSVLSNLLLV) form a cation selection region. Topologically, residues 142 to 153 (KGKIEVVKCSLL) are vacuolar. The chain crosses the membrane as a helical span at residues 154-174 (GSVLSNLLLVLGTSLFCGGVV). Residues 175–191 (NLGARQPYDRNQSDVST) lie on the Cytoplasmic side of the membrane. Residues 192-212 (ALLFLAVLCHSAPLLLRYAVA) traverse the membrane as a helical segment. The Vacuolar segment spans residues 213-228 (AGEHSVSATSAAASLD). A helical membrane pass occupies residues 229 to 249 (LSRACSFVMLASYVAYLFFQL). Residues 250–273 (KTHRQLFEPQEVDGGDAGDDDEEP) are Cytoplasmic-facing. Residues 274–294 (ALGFASALFWLALMTAVISVL) form a helical membrane-spanning segment. Residues 295 to 317 (SEYVVGTIEPTSQSWGLSVSFIS) are Vacuolar-facing. The chain crosses the membrane as a helical span at residues 318–338 (IILLPIVGNAAEHAGAIIFAL). A cation selection region spans residues 325 to 360 (GNAAEHAGAIIFALKNKLDITLGVALGSATQISMFV). Residues 339–352 (KNKLDITLGVALGS) lie on the Cytoplasmic side of the membrane. A helical transmembrane segment spans residues 353 to 373 (ATQISMFVVPLSVLVAWIMGV). Residues 374-378 (QMDLD) lie on the Vacuolar side of the membrane. The chain crosses the membrane as a helical span at residues 379–399 (FKLLETGSLFMAVLVTAFTLQ). The Cytoplasmic portion of the chain corresponds to 400 to 404 (DGTSH). A helical transmembrane segment spans residues 405–425 (YLKGILLLLCYIVIGACFFVA). Over 426-451 (RQPAGHANSNGALLDVPTGSMSVQAA) the chain is Vacuolar.

It belongs to the Ca(2+):cation antiporter (CaCA) (TC 2.A.19) family. Cation/proton exchanger (CAX) subfamily. In terms of tissue distribution, ubiquitous.

The protein resides in the vacuole membrane. Functionally, vacuolar cation/proton exchanger (CAX). Translocates Ca(2+) and other metal ions into vacuoles using the proton gradient formed by H(+)-ATPase and H(+)-pyrophosphatase. The sequence is that of Vacuolar cation/proton exchanger 1a (CAX1a) from Oryza sativa subsp. japonica (Rice).